The chain runs to 241 residues: MAEEQPQVELFVKAGSDGAKIGNCPFSQRLFMVLWLKGVTFNVTTVDTKRRTETVQKLCPGGQLPFLLYGTEVHTDTNKIEEFLEAVLCPPRYPKLAALNPESNTAGLDIFAKFSAYIKNSNPALNDNLEKGLLKALKVLDNYLTSPLPDEVDETSAEDEGISQRKFLDGNELTLADCNLLPKLHIVQVVCKKYRGFSIPDVFRGVHRYLRNAYAREEFASTCPDDEEIELAYEQVAKALK.

N-acetylalanine is present on Ala-2. The tract at residues 2 to 90 (AEEQPQVELF…EEFLEAVLCP (89 aa)) is required for insertion into the membrane. Position 13 is an N6-acetyllysine (Lys-13). The G-site motif lies at 24–27 (CPFS). Cys-24 and Cys-59 form a disulfide bridge. The helical transmembrane segment at 26-46 (FSQRLFMVLWLKGVTFNVTTV) threads the bilayer. The GST C-terminal domain occupies 93–233 (YPKLAALNPE…PDDEEIELAY (141 aa)). Position 119 is an N6-acetyllysine (Lys-119). Ser-121 carries the phosphoserine modification. Lys-131 is subject to N6-acetyllysine. Ser-156 carries the phosphoserine modification. Tyr-233 carries the post-translational modification Phosphotyrosine.

Belongs to the chloride channel CLIC family. As to quaternary structure, monomer. Homodimer (in vitro). Interacts with TRAPPC2. Dimerization requires a conformation change that leads to the exposure of a large hydrophobic surface. In vivo, this may lead to membrane insertion.

Its subcellular location is the nucleus. The protein localises to the nucleus membrane. It localises to the cytoplasm. It is found in the cell membrane. The protein resides in the endoplasmic reticulum. It catalyses the reaction L-dehydroascorbate + 2 glutathione = glutathione disulfide + L-ascorbate. The catalysed reaction is chloride(in) = chloride(out). It carries out the reaction iodide(out) = iodide(in). The enzyme catalyses thiocyanate(in) = thiocyanate(out). It catalyses the reaction nitrate(in) = nitrate(out). The catalysed reaction is bromide(in) = bromide(out). It carries out the reaction fluoride(in) = fluoride(out). Functionally, in the soluble state, catalyzes glutaredoxin-like thiol disulfide exchange reactions with reduced glutathione as electron donor. Reduces selenite and dehydroascorbate and may act as an antioxidant during oxidative stress response. Can insert into membranes and form voltage-dependent multi-ion conductive channels. Membrane insertion seems to be redox-regulated and may occur only under oxidizing conditions. Involved in regulation of the cell cycle. The protein is Chloride intracellular channel protein 1 (CLIC1) of Bos taurus (Bovine).